Consider the following 98-residue polypeptide: Large ribosomal subunit protein uL23 (98 aa).

This sequence belongs to the universal ribosomal protein uL23 family. As to quaternary structure, part of the 50S ribosomal subunit. Contacts protein L29, and trigger factor when it is bound to the ribosome.

Functionally, one of the early assembly proteins it binds 23S rRNA. One of the proteins that surrounds the polypeptide exit tunnel on the outside of the ribosome. Forms the main docking site for trigger factor binding to the ribosome. The sequence is that of Large ribosomal subunit protein uL23 from Legionella pneumophila (strain Paris).